Consider the following 625-residue polypeptide: MSASASACDCLVGVPTGPTLASTCGGSAFMLFMGLLEVFIRSQCDLEDPCGRASSRFRSEPDYEYDFIVIGGGSAGSVVASRLSEVPQWKVLLIEAGGDEPVGAQIPSMFLNFIGSDIDYRYNTEPEPMACLSSMEQRCYWPRGKVLGGTSVLNGMMYVRGNREDYDDWAADGNPGWAYNDVLPFFKKSEDNLDLDEVGTEYHAKGGLLPVGKFPYNPPLSYAILKAGEELGFSVHDLNGQNSTGFMIAQMTARNGIRYSSARAFLRPARMRNNLHILLNTTATKILIHPHTKNVLGVEVSDQFGSTRKILVKKEVVLSAGAVNSPHILLLSGVGPKDELQQVNVRTVHNLPGVGKNLHNHVTYFTNFFIDDADTAPLNWATAMEYLLFRDGLMSGTGISDVTAKLATRYADSPERPDLQLYFGGYLASCARTGQVGELLSNNSRSIQIFPAVLNPRSRGFIGLRSADPLEPPRIVANYLTHEQDVKTLVEGIKFVIRLSQTTPLKQYGMRLDKTVVKGCEAHAFGSDAYWECAVRQNTGPENHQAGSCKMGPSHDPMAVVNHELRVHGIRGLRVMDTSIMPKVSSGNTHAPAVMIAEKGAYLLKRAWGAKVURVDATWTLHRVI.

An N-terminal signal peptide occupies residues 1–42 (MSASASACDCLVGVPTGPTLASTCGGSAFMLFMGLLEVFIRS). FAD is bound at residue 66-95 (DFIVIGGGSAGSVVASRLSEVPQWKVLLIE). The active-site Proton acceptor is the histidine 544. Residue selenocysteine 613 is a non-standard amino acid, selenocysteine.

Belongs to the GMC oxidoreductase family. FAD is required as a cofactor.

The protein localises to the secreted. It catalyses the reaction a quinone + D-glucose = D-glucono-1,5-lactone + a quinol. In terms of biological role, essential for cuticular modification during development. This is Glucose dehydrogenase [FAD, quinone] (Gld) from Drosophila melanogaster (Fruit fly).